We begin with the raw amino-acid sequence, 226 residues long: Ribonuclease 3 (226 aa).

The RNase III domain occupies 5–127 (LERLQRALGY…IIGAIYLDAG (123 aa)). Glu40 is a Mg(2+) binding site. The active site involves Asp44. Mg(2+)-binding residues include Asp113 and Glu116. Glu116 is an active-site residue. In terms of domain architecture, DRBM spans 154–224 (DSKTRLQEYL…AKQALLALGV (71 aa)).

Belongs to the ribonuclease III family. In terms of assembly, homodimer. It depends on Mg(2+) as a cofactor.

The protein localises to the cytoplasm. The enzyme catalyses Endonucleolytic cleavage to 5'-phosphomonoester.. Its function is as follows. Digests double-stranded RNA. Involved in the processing of primary rRNA transcript to yield the immediate precursors to the large and small rRNAs (23S and 16S). Processes some mRNAs, and tRNAs when they are encoded in the rRNA operon. Processes pre-crRNA and tracrRNA of type II CRISPR loci if present in the organism. This Hahella chejuensis (strain KCTC 2396) protein is Ribonuclease 3.